Here is a 360-residue protein sequence, read N- to C-terminus: Photosystem II protein D1 (360 aa).

A run of 3 helical transmembrane segments spans residues 29–46 (YIGW…TATS), 118–133 (HFLT…EWEL), and 142–156 (WISV…AAAA). Position 118 (His118) interacts with chlorophyll a. Pheophytin a is bound at residue Tyr126. Positions 170 and 189 each coordinate [CaMn4O5] cluster. A helical membrane pass occupies residues 197 to 218 (FHQLGVAGVFGGSLFSAMHGSL). His198 serves as a coordination point for chlorophyll a. A quinone is bound by residues His215 and 264 to 265 (SF). His215 provides a ligand contact to Fe cation. Position 272 (His272) interacts with Fe cation. Residues 274-288 (FLGLWPVVGIWLTAL) form a helical membrane-spanning segment. The [CaMn4O5] cluster site is built by His332, Glu333, Asp342, and Ala344. The propeptide occupies 345–360 (SGESLPVALTAPAVNG).

Belongs to the reaction center PufL/M/PsbA/D family. In terms of assembly, PSII is composed of 1 copy each of membrane proteins PsbA, PsbB, PsbC, PsbD, PsbE, PsbF, PsbH, PsbI, PsbJ, PsbK, PsbL, PsbM, PsbT, PsbX, PsbY, PsbZ, Psb30/Ycf12, at least 3 peripheral proteins of the oxygen-evolving complex and a large number of cofactors. It forms dimeric complexes. The D1/D2 heterodimer binds P680, chlorophylls that are the primary electron donor of PSII, and subsequent electron acceptors. It shares a non-heme iron and each subunit binds pheophytin, quinone, additional chlorophylls, carotenoids and lipids. D1 provides most of the ligands for the Mn4-Ca-O5 cluster of the oxygen-evolving complex (OEC). There is also a Cl(-1) ion associated with D1 and D2, which is required for oxygen evolution. The PSII complex binds additional chlorophylls, carotenoids and specific lipids. serves as cofactor. Post-translationally, tyr-161 forms a radical intermediate that is referred to as redox-active TyrZ, YZ or Y-Z. C-terminally processed by CTPA; processing is essential to allow assembly of the oxygen-evolving complex and thus photosynthetic growth.

It is found in the plastid. It localises to the chloroplast thylakoid membrane. The catalysed reaction is 2 a plastoquinone + 4 hnu + 2 H2O = 2 a plastoquinol + O2. Functionally, photosystem II (PSII) is a light-driven water:plastoquinone oxidoreductase that uses light energy to abstract electrons from H(2)O, generating O(2) and a proton gradient subsequently used for ATP formation. It consists of a core antenna complex that captures photons, and an electron transfer chain that converts photonic excitation into a charge separation. The D1/D2 (PsbA/PsbD) reaction center heterodimer binds P680, the primary electron donor of PSII as well as several subsequent electron acceptors. The polypeptide is Photosystem II protein D1 (Porphyra purpurea (Red seaweed)).